The chain runs to 340 residues: tRNA-specific 2-thiouridylase MnmA (340 aa).

ATP-binding positions include 6–13 and methionine 32; that span reads AMSGGVDS. The active-site Nucleophile is the cysteine 92. Cysteines 92 and 186 form a disulfide. Glycine 116 provides a ligand contact to ATP. Residues 134–136 are interaction with tRNA; that stretch reads KDQ. Cysteine 186 acts as the Cysteine persulfide intermediate in catalysis. Residues 288–289 are interaction with tRNA; that stretch reads RY.

Belongs to the MnmA/TRMU family.

The protein resides in the cytoplasm. It catalyses the reaction S-sulfanyl-L-cysteinyl-[protein] + uridine(34) in tRNA + AH2 + ATP = 2-thiouridine(34) in tRNA + L-cysteinyl-[protein] + A + AMP + diphosphate + H(+). Its function is as follows. Catalyzes the 2-thiolation of uridine at the wobble position (U34) of tRNA, leading to the formation of s(2)U34. In Campylobacter concisus (strain 13826), this protein is tRNA-specific 2-thiouridylase MnmA.